Reading from the N-terminus, the 233-residue chain is Large ribosomal subunit protein uL1 (233 aa).

It belongs to the universal ribosomal protein uL1 family. Part of the 50S ribosomal subunit.

Binds directly to 23S rRNA. The L1 stalk is quite mobile in the ribosome, and is involved in E site tRNA release. Functionally, protein L1 is also a translational repressor protein, it controls the translation of the L11 operon by binding to its mRNA. The chain is Large ribosomal subunit protein uL1 from Shewanella amazonensis (strain ATCC BAA-1098 / SB2B).